We begin with the raw amino-acid sequence, 94 residues long: Co-chaperonin GroES (94 aa).

The protein belongs to the GroES chaperonin family. As to quaternary structure, heptamer of 7 subunits arranged in a ring. Interacts with the chaperonin GroEL.

The protein localises to the cytoplasm. In terms of biological role, together with the chaperonin GroEL, plays an essential role in assisting protein folding. The GroEL-GroES system forms a nano-cage that allows encapsulation of the non-native substrate proteins and provides a physical environment optimized to promote and accelerate protein folding. GroES binds to the apical surface of the GroEL ring, thereby capping the opening of the GroEL channel. The polypeptide is Co-chaperonin GroES (Listeria innocua serovar 6a (strain ATCC BAA-680 / CLIP 11262)).